The following is a 120-amino-acid chain: Ribonuclease P protein component (120 aa).

Belongs to the RnpA family. In terms of assembly, consists of a catalytic RNA component (M1 or rnpB) and a protein subunit.

It catalyses the reaction Endonucleolytic cleavage of RNA, removing 5'-extranucleotides from tRNA precursor.. In terms of biological role, RNaseP catalyzes the removal of the 5'-leader sequence from pre-tRNA to produce the mature 5'-terminus. It can also cleave other RNA substrates such as 4.5S RNA. The protein component plays an auxiliary but essential role in vivo by binding to the 5'-leader sequence and broadening the substrate specificity of the ribozyme. The protein is Ribonuclease P protein component of Chelativorans sp. (strain BNC1).